A 101-amino-acid polypeptide reads, in one-letter code: Replication restart protein PriB (101 aa).

Residues Met1–Thr101 form the SSB domain.

The protein belongs to the PriB family. As to quaternary structure, homodimer. Interacts with PriA and DnaT. Component of the replication restart primosome. Primosome assembly occurs via a 'hand-off' mechanism. PriA binds to replication forks, subsequently PriB then DnaT bind; DnaT then displaces ssDNA to generate the helicase loading substrate.

Involved in the restart of stalled replication forks, which reloads the replicative helicase on sites other than the origin of replication; the PriA-PriB pathway is the major replication restart pathway. During primosome assembly it facilitates complex formation between PriA and DnaT on DNA; stabilizes PriA on DNA. Stimulates the DNA unwinding activity of PriA helicase. The polypeptide is Replication restart protein PriB (Shewanella pealeana (strain ATCC 700345 / ANG-SQ1)).